Here is a 643-residue protein sequence, read N- to C-terminus: 1-deoxy-D-xylulose-5-phosphate synthase (643 aa).

Residues H72 and 113–115 contribute to the thiamine diphosphate site; that span reads GHA. D144 serves as a coordination point for Mg(2+). Residues 145-146, N174, Y287, and E370 each bind thiamine diphosphate; that span reads GA. N174 provides a ligand contact to Mg(2+).

It belongs to the transketolase family. DXPS subfamily. As to quaternary structure, homodimer. It depends on Mg(2+) as a cofactor. Thiamine diphosphate is required as a cofactor.

The catalysed reaction is D-glyceraldehyde 3-phosphate + pyruvate + H(+) = 1-deoxy-D-xylulose 5-phosphate + CO2. The protein operates within metabolic intermediate biosynthesis; 1-deoxy-D-xylulose 5-phosphate biosynthesis; 1-deoxy-D-xylulose 5-phosphate from D-glyceraldehyde 3-phosphate and pyruvate: step 1/1. In terms of biological role, catalyzes the acyloin condensation reaction between C atoms 2 and 3 of pyruvate and glyceraldehyde 3-phosphate to yield 1-deoxy-D-xylulose-5-phosphate (DXP). The protein is 1-deoxy-D-xylulose-5-phosphate synthase of Parasynechococcus marenigrum (strain WH8102).